The sequence spans 86 residues: Small ribosomal subunit protein uS17 (86 aa).

This sequence belongs to the universal ribosomal protein uS17 family. In terms of assembly, part of the 30S ribosomal subunit.

One of the primary rRNA binding proteins, it binds specifically to the 5'-end of 16S ribosomal RNA. The chain is Small ribosomal subunit protein uS17 from Caldicellulosiruptor saccharolyticus (strain ATCC 43494 / DSM 8903 / Tp8T 6331).